Reading from the N-terminus, the 386-residue chain is MAPDPIALARDLIRCPSVTPADAGALDRVQSVLEGLGFTCHRLPFQEPGTERVDNLYARLGDKGPNFCFAGHTDVVPAGDAAAWTVDPFGGEIIDGRLYGRGAADMKGGVAAFIAAVGSFLERNGPPAGSISLLITGDEEGPAVNGTRKVLDWMAAAGERIDACLVGEPTNPRALGDMIKVGRRGSLTATLTALGAQGHTAYPHLADNPLPRLAEALHLLASSPLDMGTPHFQPSTLALTSIDVGNPASNVIPARGTARFNIRFNDLHTPESLEAHIRDVLEEVGGAWELALQTSGVAFLTPPGALSDIVAAAVEAHTGRTPELSTSGGTSDARFIKDHCPVVEFGLVGASMHKVDENVAVADLLELTAIYRTVLERWFAGAEPRT.

His72 serves as a coordination point for Zn(2+). Asp74 is a catalytic residue. Position 105 (Asp105) interacts with Zn(2+). Residue Glu139 is the Proton acceptor of the active site. 3 residues coordinate Zn(2+): Glu140, Glu168, and His353.

This sequence belongs to the peptidase M20A family. DapE subfamily. Homodimer. Zn(2+) is required as a cofactor. It depends on Co(2+) as a cofactor.

It catalyses the reaction N-succinyl-(2S,6S)-2,6-diaminopimelate + H2O = (2S,6S)-2,6-diaminopimelate + succinate. It participates in amino-acid biosynthesis; L-lysine biosynthesis via DAP pathway; LL-2,6-diaminopimelate from (S)-tetrahydrodipicolinate (succinylase route): step 3/3. In terms of biological role, catalyzes the hydrolysis of N-succinyl-L,L-diaminopimelic acid (SDAP), forming succinate and LL-2,6-diaminopimelate (DAP), an intermediate involved in the bacterial biosynthesis of lysine and meso-diaminopimelic acid, an essential component of bacterial cell walls. In Rhodospirillum centenum (strain ATCC 51521 / SW), this protein is Succinyl-diaminopimelate desuccinylase.